A 207-amino-acid polypeptide reads, in one-letter code: MEAHVERALREGLTEEERAALEPAVMAHHTFPPSTTTATTAAATCTSLVTQRVAAPVRAVWPIVRSFGNPQRYKHFVRTCALAAGDGASVGSVREVTVVSGLPASTSTERLEMLDDDRHIISFRVVGGQHRLRNYRSVTSVTEFQPPAAGPGPAPPYCVVVESYVVDVPDGNTAEDTRMFTDTVVKLNLQMLAAVAEDSSSASRRRD.

An START-like region spans residues 31-197 (FPPSTTTATT…NLQMLAAVAE (167 aa)). Abscisate contacts are provided by residues Lys74, 104 to 109 (ASTSTE), 131 to 137 (RLRNYRS), and Glu162. Positions 100–104 (SGLPA) match the Gate loop motif. A Latch loop motif is present at residues 130–132 (HRL).

Belongs to the PYR/PYL/RCAR abscisic acid intracellular receptor family. Homodimer. Interacts with PP2C06. Interacts with PP2C50. Binding to PP2C50 is dependent on the presence of abscisic acid (ABA). Interacts with PP2C30 and PP2C53. Binding to PP2C30 and PP2C53 is dependent on the presence of ABA.

The protein resides in the cytoplasm. It localises to the cytosol. The protein localises to the nucleus. Its function is as follows. Involved in abscisic acid (ABA) signaling during seed germination and abiotic stress response. Acts as a positive regulator of ABA-mediated inhibition of seed germination, and tolerance to drought and cold stresses. Inhibits the activity of the protein phosphatases PP2C06 and PP2C09 when activated by abscisic acid (ABA). In Oryza sativa subsp. japonica (Rice), this protein is Abscisic acid receptor PYL9.